Reading from the N-terminus, the 176-residue chain is Large ribosomal subunit protein bL28m (176 aa).

A mitochondrion-targeting transit peptide spans 1–8 (MASKLLRK).

This sequence belongs to the bacterial ribosomal protein bL28 family. In terms of assembly, component of the mitochondrial large ribosomal subunit (mt-LSU). Mature yeast 74S mitochondrial ribosomes consist of a small (37S) and a large (54S) subunit. The 37S small subunit contains a 15S ribosomal RNA (15S mt-rRNA) and at least 32 different proteins. The 54S large subunit contains a 21S rRNA (21S mt-rRNA) and at least 45 different proteins.

Its subcellular location is the cytoplasm. It is found in the mitochondrion. Its function is as follows. Component of the mitochondrial ribosome (mitoribosome), a dedicated translation machinery responsible for the synthesis of mitochondrial genome-encoded proteins, including at least some of the essential transmembrane subunits of the mitochondrial respiratory chain. The mitoribosomes are attached to the mitochondrial inner membrane and translation products are cotranslationally integrated into the membrane. The protein is Large ribosomal subunit protein bL28m (mrpl24) of Schizosaccharomyces pombe (strain 972 / ATCC 24843) (Fission yeast).